A 458-amino-acid chain; its full sequence is uncharacterized protein (458 aa).

Residues 5–65 (QAPVNKNDVV…KGYGFGRVLN (61 aa)) enclose the TRAM domain. The [4Fe-4S] cluster site is built by cysteine 78, cysteine 84, cysteine 87, and cysteine 165. Residues glutamine 289, tyrosine 318, glutamate 339, and aspartate 387 each contribute to the S-adenosyl-L-methionine site. The active-site Nucleophile is the cysteine 414.

This sequence belongs to the class I-like SAM-binding methyltransferase superfamily. RNA M5U methyltransferase family.

This is an uncharacterized protein from Halalkalibacterium halodurans (strain ATCC BAA-125 / DSM 18197 / FERM 7344 / JCM 9153 / C-125) (Bacillus halodurans).